A 194-amino-acid chain; its full sequence is Ribonuclease HII (194 aa).

The RNase H type-2 domain maps to 3–193; that stretch reads ILTAGVDEAG…VRNLLAQQAL (191 aa). Residues aspartate 9, glutamate 10, and aspartate 101 each contribute to the a divalent metal cation site.

This sequence belongs to the RNase HII family. Requires Mn(2+) as cofactor. The cofactor is Mg(2+).

It localises to the cytoplasm. It carries out the reaction Endonucleolytic cleavage to 5'-phosphomonoester.. Its function is as follows. Endonuclease that specifically degrades the RNA of RNA-DNA hybrids. In Neisseria gonorrhoeae (strain ATCC 700825 / FA 1090), this protein is Ribonuclease HII.